Here is a 541-residue protein sequence, read N- to C-terminus: Chaperonin GroEL 1 (541 aa).

ATP-binding positions include 29–32 (TLGP), 86–90 (DGTTT), Gly413, 477–479 (NAA), and Asp493.

It belongs to the chaperonin (HSP60) family. In terms of assembly, forms a cylinder of 14 subunits composed of two heptameric rings stacked back-to-back. Interacts with the co-chaperonin GroES.

It is found in the cytoplasm. It catalyses the reaction ATP + H2O + a folded polypeptide = ADP + phosphate + an unfolded polypeptide.. Together with its co-chaperonin GroES, plays an essential role in assisting protein folding. The GroEL-GroES system forms a nano-cage that allows encapsulation of the non-native substrate proteins and provides a physical environment optimized to promote and accelerate protein folding. This Nocardioides sp. (strain ATCC BAA-499 / JS614) protein is Chaperonin GroEL 1.